The chain runs to 345 residues: Dihydroorotate dehydrogenase (quinone) (345 aa).

Residues 65 to 69 (AGLDK) and T89 each bind FMN. Residue K69 coordinates substrate. 114–118 (NRMGF) contributes to the substrate binding site. Residues N142 and N175 each contribute to the FMN site. N175 is a binding site for substrate. Catalysis depends on S178, which acts as the Nucleophile. Residue N180 participates in substrate binding. 2 residues coordinate FMN: K220 and T248. Residue 249–250 (NT) coordinates substrate. FMN-binding positions include G271, G300, and 321 to 322 (YT).

The protein belongs to the dihydroorotate dehydrogenase family. Type 2 subfamily. Monomer. It depends on FMN as a cofactor.

It localises to the cell membrane. It catalyses the reaction (S)-dihydroorotate + a quinone = orotate + a quinol. It participates in pyrimidine metabolism; UMP biosynthesis via de novo pathway; orotate from (S)-dihydroorotate (quinone route): step 1/1. In terms of biological role, catalyzes the conversion of dihydroorotate to orotate with quinone as electron acceptor. The polypeptide is Dihydroorotate dehydrogenase (quinone) (Burkholderia thailandensis (strain ATCC 700388 / DSM 13276 / CCUG 48851 / CIP 106301 / E264)).